The sequence spans 159 residues: GDP-mannose mannosyl hydrolase (159 aa).

Residues 2-3, Phe8, and Arg36 each bind substrate; that span reads FL. In terms of domain architecture, Nudix hydrolase spans 13–153; sequence RSTPLVSLDF…SRAYFLAEKR (141 aa). Residues Gly49, Glu69, and Gln122 each coordinate Mg(2+). Residues 50–71 carry the Nudix box motif; it reads GRVQKDETLEAAFERLTMAELG.

It belongs to the Nudix hydrolase family. Homodimer. It depends on Mg(2+) as a cofactor.

The catalysed reaction is GDP-alpha-D-mannose + H2O = D-mannose + GDP + H(+). Functionally, hydrolyzes GDP-mannose. In Escherichia coli O157:H7, this protein is GDP-mannose mannosyl hydrolase.